Consider the following 303-residue polypeptide: Elongation factor Ts (303 aa).

The involved in Mg(2+) ion dislocation from EF-Tu stretch occupies residues 82–85 (TDFV).

Belongs to the EF-Ts family.

The protein localises to the cytoplasm. Associates with the EF-Tu.GDP complex and induces the exchange of GDP to GTP. It remains bound to the aminoacyl-tRNA.EF-Tu.GTP complex up to the GTP hydrolysis stage on the ribosome. The polypeptide is Elongation factor Ts (Clostridioides difficile (strain 630) (Peptoclostridium difficile)).